The primary structure comprises 252 residues: MASSDGKPLPTPASVGGGGGSSTAPPGQPTTVASKVLDMGAAAMQSLRPVKQAKQHMCTFALYAHDPKRQVETHHYVSRLNQDFLQCAVYDSDKADARLIGVEYIVSRKIFDSLPAEEQRLWHSHAHEIKSGLWTSPHVAGLLEKAELDHMAATFGKFWCTWQVDRGDRLPLGAPALMVSPQADPAAAVRPDLVRKRDDRYGLSTEELRAARADVEAPAEEHPGQADYWLRHRKGFAVDVVPHEMKRHAPFP.

The disordered stretch occupies residues 1-31; it reads MASSDGKPLPTPASVGGGGGSSTAPPGQPTT. Low complexity predominate over residues 22-31; sequence STAPPGQPTT.

It belongs to the OBAP family.

The sequence is that of Oil body-associated protein 2A from Zea mays (Maize).